The sequence spans 161 residues: UPF0178 protein BruAb1_1955 (161 aa).

This sequence belongs to the UPF0178 family.

This is UPF0178 protein BruAb1_1955 from Brucella abortus biovar 1 (strain 9-941).